We begin with the raw amino-acid sequence, 207 residues long: Large ribosomal subunit protein uL4 (207 aa).

The interval 44–77 (RRQGTHDTKTRSEVRGGGRKPWRQKGTGRARHGT) is disordered. Residues 47-59 (GTHDTKTRSEVRG) show a composition bias toward basic and acidic residues. The segment covering 60 to 77 (GGRKPWRQKGTGRARHGT) has biased composition (basic residues).

Belongs to the universal ribosomal protein uL4 family. In terms of assembly, part of the 50S ribosomal subunit.

Functionally, one of the primary rRNA binding proteins, this protein initially binds near the 5'-end of the 23S rRNA. It is important during the early stages of 50S assembly. It makes multiple contacts with different domains of the 23S rRNA in the assembled 50S subunit and ribosome. Forms part of the polypeptide exit tunnel. This chain is Large ribosomal subunit protein uL4, found in Desulforudis audaxviator (strain MP104C).